The sequence spans 49 residues: Osteocalcin (49 aa).

Residues 1–47 (YLDPGLGAPAPYPDPLEPKREVCELNPDCDELADHIGFQEAYRRFYG) enclose the Gla domain. Pro-9 is modified (hydroxyproline). Ca(2+) is bound by residues Glu-17, Glu-21, Glu-24, and Asp-30. 4-carboxyglutamate is present on residues Glu-17, Glu-21, and Glu-24. A disulfide bridge connects residues Cys-23 and Cys-29.

It belongs to the osteocalcin/matrix Gla protein family. Post-translationally, gamma-carboxyglutamate residues are formed by vitamin K dependent carboxylation by GGCX. These residues are essential for the binding of calcium. Decarboxylation promotes the hormone activity.

Its subcellular location is the secreted. Its function is as follows. The carboxylated form is one of the main organic components of the bone matrix, which constitutes 1-2% of the total bone protein. It acts as a negative regulator of bone formation and is required to limit bone formation without impairing bone resorption or mineralization. The carboxylated form binds strongly to apatite and calcium. In terms of biological role, the uncarboxylated form acts as a hormone secreted by osteoblasts, which regulates different cellular processes, such as energy metabolism, male fertility and brain development. Regulates of energy metabolism by acting as a hormone favoring pancreatic beta-cell proliferation, insulin secretion and sensitivity and energy expenditure. Uncarboxylated osteocalcin hormone also promotes testosterone production in the testes: acts as a ligand for G protein-coupled receptor GPRC6A at the surface of Leydig cells, initiating a signaling response that promotes the expression of enzymes required for testosterone synthesis in a CREB-dependent manner. Also acts as a regulator of brain development: osteocalcin hormone crosses the blood-brain barrier and acts as a ligand for GPR158 on neurons, initiating a signaling response that prevents neuronal apoptosis in the hippocampus, favors the synthesis of all monoamine neurotransmitters and inhibits that of gamma-aminobutyric acid (GABA). Osteocalcin also crosses the placenta during pregnancy and maternal osteocalcin is required for fetal brain development. This Capra hircus (Goat) protein is Osteocalcin (BGLAP).